The primary structure comprises 316 residues: uncharacterized protein (316 aa).

The protein belongs to the chlamydial CPn_0441/CT_007/TC_0275 family.

This is an uncharacterized protein from Chlamydia muridarum (strain MoPn / Nigg).